A 1125-amino-acid polypeptide reads, in one-letter code: MDSLAGLVLCGVSLLLSATVDGAMDLILINSLPLVSDAETSLTCIASGWRPHEPITIGRDFEALMNQHQDPLEVTQDATREWAKKVVWKREKASKINGAYFCEGRVRGQAIRIRTMKMRQQASFLPATLTMTVDRGDNVNISFKKVLIKEEDAVIYKNGSFIHSVPRHEVPDILEVQVPHAQPQDAGVYSARYIGGNLFTSAFTRLIVRRCEAQKWGPECNRICTACMNNGICHEDTGECICPPGFMGRTCEKACEPHTFGRTCKERCSEPEGCKSFVFCLPDPYGCSCATGWKGLQCNEACQPGYYGPDCKLRCSCTNGEKCDRFQGCLCSPGRQGLQCEKEGVPRMTPKIEDLPDHIEVNSGKFNPICKASGWPRPANEEMTLVKPDGTVLRPKDFNHTGHLSVATFTINRILPPDSGVWVCSVNTVSGMVEKPFNISVKVLPKPLNAPKVIDTGHNFAVINISSEPYFGDGPIKSKKLLYKPVNHYEAWRHIQVTNEIVTLNYLEPRTEYELCVQLVRRGEGGEGHPGPVRRFTTASIGLPPPRGLSLLPKSQTTLNLTWQPIFPSSEDDFYVEVERRSVQMNSDQQNIKVPGNLTSVLLNNLHPREQYIVRARVNTKAQGEWSEDLIAWTLSDIVPPQPENIKIFNITDSSAVISWTILDGYSISAIIIRYKVQGKNEDQHIDVKIKNATITQYQLKGLEPQTVYQVDIFAENNIGSSNPTSSHELTTLSESQAPADLGGRKMLLIAILGSAGMTCLTVLLAFLIMLQLKRANVQRRMAQAFQNVREEPAVQFNSGTLALNRKAKNNPDPTIYPVLDWNDIKFQDVIGEGNFGQVLKARIKKDGLRMDAAIKRMKEYASKDDHRDFAGELEVLCKLGHHPNIINLLGACEHRGYLYLAIEYAPHGNLLDFLRKSRVLETDPAFAIANSTASTLSSQQLLHFAADVARGMDYLSQKQFIHRDLAARNILVGENYVAKIADFGLSRGQEVYVKKTMGRLPVRWMAIESLNYSVYTTNSDVWSYGVLLWEIVSLGGTPYCGMTCAELYEKLPQGYRLEKPLNCDDEVYDLMRQCWREKPYERPSFAQILVSLNRMLEERKTYVNTTLYEKFTYAGIDCSAEEAA.

Positions Met-1–Gly-22 are cleaved as a signal peptide. Residues Ala-23–Leu-748 are Extracellular-facing. Cys-44 and Cys-102 are oxidised to a cystine. In terms of domain architecture, Ig-like C2-type 1 spans Cys-44–Ser-123. Residue Asn-158 is glycosylated (N-linked (GlcNAc...) asparagine). EGF-like domains lie at Arg-210–Glu-252, Ala-254–Asn-299, and Ala-301–Glu-341. 13 cysteine pairs are disulfide-bonded: Cys-211–Cys-220, Cys-224–Cys-233, Cys-227–Cys-240, Cys-242–Cys-251, Cys-255–Cys-264, Cys-268–Cys-274, Cys-280–Cys-287, Cys-289–Cys-298, Cys-302–Cys-311, Cys-315–Cys-323, Cys-317–Cys-329, Cys-331–Cys-340, and Cys-370–Cys-424. In terms of domain architecture, Ig-like C2-type 2 spans Pro-350–Ser-440. Fibronectin type-III domains lie at Pro-447 to Ile-541, Pro-545 to Asp-637, and Gln-642 to Glu-735. The chain crosses the membrane as a helical span at residues Leu-749 to Ile-769. The Cytoplasmic portion of the chain corresponds to Met-770–Ala-1125. In terms of domain architecture, Protein kinase spans Ile-825–Leu-1097. ATP is bound by residues Ile-831–Val-839 and Lys-856. Tyr-861 is modified (phosphotyrosine; by autocatalysis). Catalysis depends on Asp-965, which acts as the Proton acceptor. 3 positions are modified to phosphotyrosine; by autocatalysis: Tyr-993, Tyr-1103, and Tyr-1109.

It belongs to the protein kinase superfamily. Tyr protein kinase family. Tie subfamily. As to quaternary structure, homodimer. Heterodimer with TIE1. Interacts with ANGPT1, ANGPT2 and ANGPT4. At cell-cell contacts in quiescent cells, forms a signaling complex composed of ANGPT1 plus TEK molecules from two adjoining cells. In the absence of endothelial cell-cell contacts, interaction with ANGPT1 mediates contacts with the extracellular matrix. Interacts (tyrosine phosphorylated) with TNIP2. Interacts (tyrosine phosphorylated) with SHC1 (via SH2 domain). Interacts with PTPRB; this promotes endothelial cell-cell adhesion. Interacts with DOK2, GRB2, GRB7, GRB14, PIK3R1 and PTPN11/SHP2. Colocalizes with DOK2 at contacts with the extracellular matrix in migrating cells. Post-translationally, proteolytic processing leads to the shedding of the extracellular domain (soluble TIE-2 alias sTIE-2). In terms of processing, autophosphorylated on tyrosine residues in response to ligand binding. Autophosphorylation occurs in trans, i.e. one subunit of the dimeric receptor phosphorylates tyrosine residues on the other subunit. Autophosphorylation occurs in a sequential manner, where Tyr-993 in the kinase activation loop is phosphorylated first, followed by autophosphorylation at Tyr-1109 and at additional tyrosine residues. ANGPT1-induced phosphorylation is impaired during hypoxia, due to increased expression of ANGPT2. Phosphorylation is important for interaction with GRB14, PIK3R1 and PTPN11. Phosphorylation at Tyr-1103 is important for interaction with GRB2 and GRB7. Phosphorylation at Tyr-1109 is important for interaction with DOK2 and for coupling to downstream signal transduction pathways in endothelial cells. Dephosphorylated by PTPRB. Ubiquitinated. The phosphorylated receptor is ubiquitinated and internalized, leading to its degradation. Specifically expressed in developing vascular endothelial cells.

It is found in the cell membrane. The protein localises to the cell junction. It localises to the focal adhesion. The protein resides in the cytoplasm. Its subcellular location is the cytoskeleton. It is found in the secreted. The enzyme catalyses L-tyrosyl-[protein] + ATP = O-phospho-L-tyrosyl-[protein] + ADP + H(+). Angiopoietin binding leads to receptor dimerization and activation by autophosphorylation at Tyr-993 on the kinase activation loop. Functionally, tyrosine-protein kinase that acts as a cell-surface receptor for ANGPT1, ANGPT2 and ANGPT4 and regulates angiogenesis, endothelial cell survival, proliferation, migration, adhesion and cell spreading, reorganization of the actin cytoskeleton, but also maintenance of vascular quiescence. Has anti-inflammatory effects by preventing the leakage of pro-inflammatory plasma proteins and leukocytes from blood vessels. Required for normal angiogenesis and heart development during embryogenesis. Required for post-natal hematopoiesis. After birth, activates or inhibits angiogenesis, depending on the context. Inhibits angiogenesis and promotes vascular stability in quiescent vessels, where endothelial cells have tight contacts. In quiescent vessels, ANGPT1 oligomers recruit TEK to cell-cell contacts, forming complexes with TEK molecules from adjoining cells, and this leads to preferential activation of phosphatidylinositol 3-kinase and the AKT1 signaling cascades. In migrating endothelial cells that lack cell-cell adhesions, ANGT1 recruits TEK to contacts with the extracellular matrix, leading to the formation of focal adhesion complexes, activation of PTK2/FAK and of the downstream kinases MAPK1/ERK2 and MAPK3/ERK1, and ultimately to the stimulation of sprouting angiogenesis. ANGPT1 signaling triggers receptor dimerization and autophosphorylation at specific tyrosine residues that then serve as binding sites for scaffold proteins and effectors. Signaling is modulated by ANGPT2 that has lower affinity for TEK, can promote TEK autophosphorylation in the absence of ANGPT1, but inhibits ANGPT1-mediated signaling by competing for the same binding site. Signaling is also modulated by formation of heterodimers with TIE1, and by proteolytic processing that gives rise to a soluble TEK extracellular domain. The soluble extracellular domain modulates signaling by functioning as decoy receptor for angiopoietins. TEK phosphorylates DOK2, GRB7, GRB14, PIK3R1, SHC1 and TIE1. This is Angiopoietin-1 receptor (TEK) from Bos taurus (Bovine).